Reading from the N-terminus, the 82-residue chain is Cytochrome b559 subunit alpha (82 aa).

Residues Ile22–Phe36 form a helical membrane-spanning segment. Residue His24 coordinates heme.

Belongs to the PsbE/PsbF family. Heterodimer of an alpha subunit and a beta subunit. PSII is composed of 1 copy each of membrane proteins PsbA, PsbB, PsbC, PsbD, PsbE, PsbF, PsbH, PsbI, PsbJ, PsbK, PsbL, PsbM, PsbT, PsbX, PsbY, Psb30/Ycf12, peripheral proteins PsbO, CyanoQ (PsbQ), PsbU, PsbV and a large number of cofactors. It forms dimeric complexes. Requires heme b as cofactor.

Its subcellular location is the cellular thylakoid membrane. Its function is as follows. This b-type cytochrome is tightly associated with the reaction center of photosystem II (PSII). PSII is a light-driven water:plastoquinone oxidoreductase that uses light energy to abstract electrons from H(2)O, generating O(2) and a proton gradient subsequently used for ATP formation. It consists of a core antenna complex that captures photons, and an electron transfer chain that converts photonic excitation into a charge separation. In Prochlorococcus marinus (strain SARG / CCMP1375 / SS120), this protein is Cytochrome b559 subunit alpha.